Here is a 286-residue protein sequence, read N- to C-terminus: Formamidopyrimidine-DNA glycosylase (286 aa).

The Schiff-base intermediate with DNA role is filled by Pro-2. Glu-3 functions as the Proton donor in the catalytic mechanism. Lys-60 serves as the catalytic Proton donor; for beta-elimination activity. The DNA site is built by His-103, Arg-122, and Arg-167. The segment at 252–286 (WVYRRNQKPCRKCGTLIEKTKVAGRSTHWCPNCQN) adopts an FPG-type zinc-finger fold. Residue Arg-276 is the Proton donor; for delta-elimination activity of the active site.

The protein belongs to the FPG family. As to quaternary structure, monomer. Zn(2+) is required as a cofactor.

The enzyme catalyses Hydrolysis of DNA containing ring-opened 7-methylguanine residues, releasing 2,6-diamino-4-hydroxy-5-(N-methyl)formamidopyrimidine.. It carries out the reaction 2'-deoxyribonucleotide-(2'-deoxyribose 5'-phosphate)-2'-deoxyribonucleotide-DNA = a 3'-end 2'-deoxyribonucleotide-(2,3-dehydro-2,3-deoxyribose 5'-phosphate)-DNA + a 5'-end 5'-phospho-2'-deoxyribonucleoside-DNA + H(+). Involved in base excision repair of DNA damaged by oxidation or by mutagenic agents. Acts as a DNA glycosylase that recognizes and removes damaged bases. Has a preference for oxidized purines, such as 7,8-dihydro-8-oxoguanine (8-oxoG). Has AP (apurinic/apyrimidinic) lyase activity and introduces nicks in the DNA strand. Cleaves the DNA backbone by beta-delta elimination to generate a single-strand break at the site of the removed base with both 3'- and 5'-phosphates. This Prochlorococcus marinus (strain MIT 9211) protein is Formamidopyrimidine-DNA glycosylase.